A 723-amino-acid chain; its full sequence is MSEKQVFSTEWAGKTLSVEVGQLAKQASGAALIRYGDTVVLTAAVGSKKPRPGDFFPLTVNYEEKMYSVGKVPGGFLKREGRPSDRATLTARLIDRPIRPLFAEGFRNEVQITSTVFSVDQDCSPEMAAMLGSSVALVISDIPFEGPIAGVDVGRIDGKYVINPTIEQAEKSDISLTVAGTYDAINMVEAGAKEVSEEAMLEAIMFGHEEIKRLCEFQQQIIAAVGKEKREIELFVSDPELEAEVKAASEGKMKAAIKTEEKKAREAAIEEVKEEILESYKAKELENEAEILGEVAHILEMIEKDEMRRLISQDKIRPDGRKVNEIRPLSSEVGMLPRVHGSGLFTRGQTQALSVCTLAPLREHQIIDGLGTEEYKRFMHHYNFPQFSVGETGPRRAPGRREIGHGALGERALQYVIPSEEEFPYTIRLVSEVLESNGSSSQASICGSTLAMLDAGVPIKAPVAGIAMGLVKLGDDYTILSDIQGMEDHFGDMDFKVAGTKDGITALQMDIKIDGLSRQILDEALTQAKEGRLHILEHLTSTISAPREELSAYAPKIITLNIKPEKIKDVIGPGGKQINAIIDETGVKIDIEQDGTVYIASQDQAMNRKAIAIIEDIVREVEVGEVYTGKVRRIEKFGAFVELFKGTDGLVHISELAHERVGKVEDILKLGDEVTVKVIEVDQQGRVNLSRKALLEKKEQPEGDKKPQAEKKFYPKTKKPESK.

2 residues coordinate Mg(2+): Asp-488 and Asp-494. Residues 555-614 form the KH domain; sequence PKIITLNIKPEKIKDVIGPGGKQINAIIDETGVKIDIEQDGTVYIASQDQAMNRKAIAII. The region spanning 624-692 is the S1 motif domain; it reads GEVYTGKVRR…QQGRVNLSRK (69 aa). The tract at residues 692–723 is disordered; that stretch reads KALLEKKEQPEGDKKPQAEKKFYPKTKKPESK. Over residues 693–723 the composition is skewed to basic and acidic residues; that stretch reads ALLEKKEQPEGDKKPQAEKKFYPKTKKPESK.

This sequence belongs to the polyribonucleotide nucleotidyltransferase family. Mg(2+) serves as cofactor.

Its subcellular location is the cytoplasm. The catalysed reaction is RNA(n+1) + phosphate = RNA(n) + a ribonucleoside 5'-diphosphate. Functionally, involved in mRNA degradation. Catalyzes the phosphorolysis of single-stranded polyribonucleotides processively in the 3'- to 5'-direction. In Listeria monocytogenes serotype 4a (strain HCC23), this protein is Polyribonucleotide nucleotidyltransferase.